The following is a 164-amino-acid chain: uncharacterized protein (164 aa).

Residues 28–157 enclose the HTH marR-type domain; sequence EAEILYQLQG…LIDVLARMRN (130 aa). The segment at residues 71–94 is a DNA-binding region (H-T-H motif); sequence QSDLQKKVNIDSAAVTRHLKQLES.

This is an uncharacterized protein from Bacillus subtilis (strain 168).